A 445-amino-acid polypeptide reads, in one-letter code: tRNA-2-methylthio-N(6)-dimethylallyladenosine synthase (445 aa).

Positions 4–121 (NKIYIKTWGC…LPNMIQEVKK (118 aa)) constitute an MTTase N-terminal domain. [4Fe-4S] cluster contacts are provided by cysteine 13, cysteine 50, cysteine 84, cysteine 158, cysteine 162, and cysteine 165. Positions 144-376 (RKPKVTAFVS…QTLIRNNTTM (233 aa)) constitute a Radical SAM core domain. In terms of domain architecture, TRAM spans 379–442 (QKMLGSIQSV…PNSLRGSYEK (64 aa)).

This sequence belongs to the methylthiotransferase family. MiaB subfamily. In terms of assembly, monomer. Requires [4Fe-4S] cluster as cofactor.

The protein resides in the cytoplasm. The enzyme catalyses N(6)-dimethylallyladenosine(37) in tRNA + (sulfur carrier)-SH + AH2 + 2 S-adenosyl-L-methionine = 2-methylsulfanyl-N(6)-dimethylallyladenosine(37) in tRNA + (sulfur carrier)-H + 5'-deoxyadenosine + L-methionine + A + S-adenosyl-L-homocysteine + 2 H(+). Its function is as follows. Catalyzes the methylthiolation of N6-(dimethylallyl)adenosine (i(6)A), leading to the formation of 2-methylthio-N6-(dimethylallyl)adenosine (ms(2)i(6)A) at position 37 in tRNAs that read codons beginning with uridine. This is tRNA-2-methylthio-N(6)-dimethylallyladenosine synthase from Buchnera aphidicola subsp. Baizongia pistaciae (strain Bp).